A 1133-amino-acid chain; its full sequence is ATP-dependent DNA helicase homolog MER3 (1133 aa).

A Helicase ATP-binding domain is found at 34-229; sequence PLCFHSDINM…WLKVPTAGIK (196 aa). ATP is bound at residue 47–54; sequence APTGSGKT. The DEVH box motif lies at 165 to 168; it reads DEVH. Positions 263 to 460 constitute a Helicase C-terminal domain; it reads YIYDILMQYS…CLIEHLTAEI (198 aa). The region spanning 536–847 is the SEC63 domain; it reads EPGRLMTKYY…FEEYIGIDLH (312 aa). The tract at residues 878–919 is disordered; it reads ACIADDDNPVTSGPSNRKDKKDDMPSFKLIDDDSEEEKEPYV. Residues 893–908 are compositionally biased toward basic and acidic residues; sequence NRKDKKDDMPSFKLID. The span at 909–919 shows a compositional bias: acidic residues; that stretch reads DDSEEEKEPYV.

It belongs to the helicase family. SKI2 subfamily. Expressed in meiocytes during meiosis.

Its subcellular location is the nucleus. It carries out the reaction Couples ATP hydrolysis with the unwinding of duplex DNA by translocating in the 3'-5' direction.. The catalysed reaction is ATP + H2O = ADP + phosphate + H(+). In terms of biological role, DNA helicase required for crossover formation, complete synapsis of homologous chromosomes and bivalent formation during meiosis. Is specific to recombination events resulting in interference-sensitive crossovers (class I meiotic crossover). The polypeptide is ATP-dependent DNA helicase homolog MER3 (Arabidopsis thaliana (Mouse-ear cress)).